The chain runs to 1394 residues: Leucine-rich PPR motif-containing protein, mitochondrial (1394 aa).

A mitochondrion-targeting transit peptide spans 1-59; it reads MAALLRSARWLLRAGAAPRLPLSLRLLPGGPGRLHAASYLPAARAGPVAGGLLSPARLY. PPR repeat units lie at residues 126–160, 161–195, 196–230, 231–265, 266–300, 301–335, 403–437, and 438–472; these read LLRS…GAVY, DVSH…NIQP, NRVT…DLPV, TEAV…GIEP, GPDT…ELHL, MDRD…RRYI, HSFP…GFPI, and RPHY…GVHP. An N6-acetyllysine mark is found at K155, K187, and K226. Residue K292 is modified to N6-acetyllysine. N6-acetyllysine occurs at positions 463 and 613. PPR repeat units lie at residues 678 to 709, 710 to 746, 747 to 784, 785 to 820, 821 to 856, and 954 to 988; these read IRDV…ESDM, VTGG…SAVL, DTGK…IKDT, TALS…LAEP, STNI…KVLP, and RDQM…NVIP. An interaction with BECN1 and Aedes aegypti venom allergen-1 region spans residues 712 to 1067; the sequence is GGYAALINLC…AKEQNIVFNA (356 aa). Residues K726 and K750 each carry the N6-acetyllysine modification. Residues S1026, S1027, and S1029 each carry the phosphoserine modification. PPR repeat units lie at residues 1031–1065, 1066–1102, 1103–1137, 1138–1175, 1176–1210, and 1317–1351; these read TEPD…NIVF, NAET…GFTL, NDAA…QQTP, SRLA…IGLS, KMVF…ENKV, and KEEA…NTKL. Residues 1121-1394 form an RNA-binding region; the sequence is KEAVTTLKTV…QLRKLRENSS (274 aa). T1136 bears the Phosphothreonine mark. A Phosphoserine modification is found at S1138.

Component of mRNP complexes associated with HNRPA1. Component of the complex, at least composed of LRPPRC, BECN1 and BCL2; the interactions prevent BECN1 from forming an autophagy-inducing complex with PIK3C3. Interacts with CECR2, HEBP2, MAP1S and UXT. Interacts with PPARGC1A. Interacts with FOXO1. Interacts (via N-terminus) with EIF4E; the interaction promotes association of EIF4E with 4ESE-containing mRNAs. Interacts with exportin XPO1/CRM1; interacts both alone and in complex with EIF4E and 4ESE-containing mRNAs to form an EIF4E-dependent mRNA export complex. Interacts with importin IPO8; the interaction occurs when LRPPRC is in its RNA-free form and returns LRPPRC to the nucleus for further export rounds. Interacts with BECN1. Interacts with Aedes aegypti venom allergen-1; the interaction interrupts BECN1 and LRPPRC association. As to expression, expressed ubiquitously. Expression is highest in heart, skeletal muscle, kidney and liver, intermediate in brain, non-mucosal colon, spleen and placenta, and lowest in small intestine, thymus, lung and peripheral blood leukocytes.

The protein resides in the mitochondrion. It localises to the nucleus. The protein localises to the nucleoplasm. Its subcellular location is the nucleus inner membrane. It is found in the nucleus outer membrane. Functionally, may play a role in RNA metabolism in both nuclei and mitochondria. In the nucleus binds to HNRPA1-associated poly(A) mRNAs and is part of nmRNP complexes at late stages of mRNA maturation which are possibly associated with nuclear mRNA export. Positively modulates nuclear export of mRNAs containing the EIF4E sensitivity element (4ESE) by binding simultaneously to both EIF4E and the 4ESE and acting as a platform for assembly for the RNA export complex. Also binds to exportin XPO1/CRM1 to engage the nuclear pore and traffic the bound mRNAs to the cytoplasm. May bind mature mRNA in the nucleus outer membrane. In mitochondria binds to poly(A) mRNA. Plays a role in translation or stability of mitochondrially encoded cytochrome c oxidase (COX) subunits. May be involved in transcription regulation. Cooperates with PPARGC1A to regulate certain mitochondrially encoded genes and gluconeogenic genes and may regulate docking of PPARGC1A to transcription factors. Seems to be involved in the transcription regulation of the multidrug-related genes MDR1 and MVP. Part of a nuclear factor that binds to the invMED1 element of MDR1 and MVP gene promoters. Binds single-stranded DNA. Required for maintaining mitochondrial potential. Suppresses the initiation of basal levels of autophagy and mitophagy by sustaining BCL2 levels. The protein is Leucine-rich PPR motif-containing protein, mitochondrial (LRPPRC) of Homo sapiens (Human).